The sequence spans 1501 residues: Ribulose bisphosphate carboxylase (1501 aa).

Asparagine 111 contacts substrate. The Proton acceptor role is filled by lysine 166. Residue lysine 168 participates in substrate binding. Lysine 191, aspartate 193, and glutamate 194 together coordinate Mg(2+). Lysine 191 carries the post-translational modification N6-carboxylysine. Histidine 287 serves as the catalytic Proton acceptor. Arginine 288, histidine 321, and serine 368 together coordinate substrate. The propeptide at 486-508 (SAAAFVGASVAPAKKENVVARQA) is linker. Asparagine 619 lines the substrate pocket. The Proton acceptor role is filled by lysine 674. Lysine 676 serves as a coordination point for substrate. Lysine 699, aspartate 701, and glutamate 702 together coordinate Mg(2+). Residue lysine 699 is modified to N6-carboxylysine. Histidine 795 acts as the Proton acceptor in catalysis. Positions 796, 829, and 876 each coordinate substrate. The propeptide at 994-1016 (SAAAFVGASVAPAKKENVVARQA) is linker. Asparagine 1127 contacts substrate. Lysine 1182 (proton acceptor) is an active-site residue. Residue lysine 1184 participates in substrate binding. The Mg(2+) site is built by lysine 1207, aspartate 1209, and glutamate 1210. An N6-carboxylysine modification is found at lysine 1207. Histidine 1303 acts as the Proton acceptor in catalysis. Residues arginine 1304, histidine 1337, and serine 1384 each coordinate substrate.

This sequence belongs to the RuBisCO large chain family. Type II subfamily. In terms of assembly, homodimer. Mg(2+) serves as cofactor.

The protein localises to the plastid. It localises to the chloroplast. It carries out the reaction 2 (2R)-3-phosphoglycerate + 2 H(+) = D-ribulose 1,5-bisphosphate + CO2 + H2O. The catalysed reaction is D-ribulose 1,5-bisphosphate + O2 = 2-phosphoglycolate + (2R)-3-phosphoglycerate + 2 H(+). Functionally, ruBisCO catalyzes two reactions: the carboxylation of D-ribulose 1,5-bisphosphate, the primary event in carbon dioxide fixation, as well as the oxidative fragmentation of the pentose substrate. Both reactions occur simultaneously and in competition at the same active site. This is Ribulose bisphosphate carboxylase (rbcL) from Symbiodinium sp. (Dinoflagellate).